A 260-amino-acid polypeptide reads, in one-letter code: Cytosolic Fe-S cluster assembly factor Nubp2 homolog (260 aa).

14–21 serves as a coordination point for ATP; that stretch reads GKGGVGKS. The [4Fe-4S] cluster site is built by Cys-188 and Cys-191.

It belongs to the Mrp/NBP35 ATP-binding proteins family. NUBP2/CFD1 subfamily. In terms of assembly, heterotetramer of 2 Nubp1 and 2 Nubp2 chains. [4Fe-4S] cluster is required as a cofactor.

The protein localises to the cytoplasm. Functionally, component of the cytosolic iron-sulfur (Fe/S) protein assembly (CIA) machinery. Required for maturation of extramitochondrial Fe-S proteins. The Nubp1-Nubp2 heterotetramer forms a Fe-S scaffold complex, mediating the de novo assembly of an Fe-S cluster and its transfer to target apoproteins. The sequence is that of Cytosolic Fe-S cluster assembly factor Nubp2 homolog from Drosophila sechellia (Fruit fly).